Here is a 355-residue protein sequence, read N- to C-terminus: Chorismate synthase (355 aa).

Arg48 provides a ligand contact to NADP(+). Residues 126–128 (RSS), Gly278, 293–297 (KPIPS), and Arg319 each bind FMN.

This sequence belongs to the chorismate synthase family. As to quaternary structure, homotetramer. The cofactor is FMNH2.

It catalyses the reaction 5-O-(1-carboxyvinyl)-3-phosphoshikimate = chorismate + phosphate. It participates in metabolic intermediate biosynthesis; chorismate biosynthesis; chorismate from D-erythrose 4-phosphate and phosphoenolpyruvate: step 7/7. Catalyzes the anti-1,4-elimination of the C-3 phosphate and the C-6 proR hydrogen from 5-enolpyruvylshikimate-3-phosphate (EPSP) to yield chorismate, which is the branch point compound that serves as the starting substrate for the three terminal pathways of aromatic amino acid biosynthesis. This reaction introduces a second double bond into the aromatic ring system. The sequence is that of Chorismate synthase from Oleidesulfovibrio alaskensis (strain ATCC BAA-1058 / DSM 17464 / G20) (Desulfovibrio alaskensis).